The sequence spans 68 residues: Large ribosomal subunit protein bL32 (68 aa).

The disordered stretch occupies residues 1-25; the sequence is MAVPQNKITKSRRGQRRSHDALVAG.

The protein belongs to the bacterial ribosomal protein bL32 family.

The protein is Large ribosomal subunit protein bL32 of Dinoroseobacter shibae (strain DSM 16493 / NCIMB 14021 / DFL 12).